The primary structure comprises 468 residues: Cell division protein FtsA (468 aa).

The segment at 416 to 468 (NKKDTHENEVESSDEEIYQSEDNHQEHKQNHEHVQDKDKEESKFKKLMKSLFE) is disordered. Residues 425–434 (VESSDEEIYQ) show a composition bias toward acidic residues. A compositionally biased stretch (basic and acidic residues) spans 436–459 (EDNHQEHKQNHEHVQDKDKEESKF).

It belongs to the FtsA/MreB family. Self-interacts. Interacts with FtsZ.

The protein resides in the cell membrane. Cell division protein that is involved in the assembly of the Z ring. May serve as a membrane anchor for the Z ring. The chain is Cell division protein FtsA from Staphylococcus aureus (strain MRSA252).